The sequence spans 619 residues: Calnexin (619 aa).

The N-terminal stretch at 1-21 (MVNRKWMYIFIQFLLVSSIRS) is a signal peptide. Position 109 (Asp-109) interacts with Ca(2+). Cys-152 and Cys-186 form a disulfide bridge. Residues Tyr-156, Lys-158, Tyr-177, and Asp-184 each contribute to the an alpha-D-glucoside site. N-linked (GlcNAc...) asparagine glycosylation is present at Asn-203. The interval 268-401 (IFDETDLKPV…RLIDNPNYFE (134 aa)) is p domain (Extended arm). 5 repeat units span residues 270–282 (DETD…WDER), 287–299 (DESA…WDEN), 306–318 (DEAA…WNEE), 325–337 (DPEA…WDED), and 340–350 (GSWEAPLIDNP). 4 X approximate repeats stretches follow at residues 270 to 337 (DETD…WDED) and 340 to 397 (GSWE…IDNP). A disulfide bridge connects residues Cys-352 and Cys-358. Tandem repeats lie at residues 359-369 (GTWKAPTIKNP), 373-383 (GKWIRPKISNP), and 387-397 (GKWTARLIDNP). Glu-417 provides a ligand contact to an alpha-D-glucoside. Asp-428 lines the Ca(2+) pocket. The chain crosses the membrane as a helical span at residues 481 to 501 (LWAVYILCVLLPLVAIGVFCF). The interval 538–619 (GDEEDDVNQP…AKRRTARRGD (82 aa)) is disordered. The segment covering 547-557 (PGPSGSQSNPE) has biased composition (polar residues). The span at 566-577 (EQQSANSSQSSA) shows a compositional bias: low complexity. Residue Asn-571 is glycosylated (N-linked (GlcNAc...) asparagine). Residues 585-601 (HVVPENEPVKPTEEFAK) show a composition bias toward basic and acidic residues. The segment covering 610 to 619 (AKRRTARRGD) has biased composition (basic residues).

This sequence belongs to the calreticulin family. Post-translationally, glycosylation is important for its biological activity. In terms of tissue distribution, expressed ubiquitously in every blastomere of the embryo up to the gastrulation stage. Expression becomes gradually restricted to the head and tail regions at the comma stage during embryogenesis. During postembryonic development, expressed prominently in the H-shaped excretory cell, in the neurons of head (including ASK and ADL) and tail (including PHA and PHB), in the dorsal and ventral nerve cords, and in the spermatheca. Expressed in the spicules of the male tail (at protein level).

Its subcellular location is the endoplasmic reticulum membrane. The protein localises to the cytoplasm. The protein resides in the perinuclear region. It localises to the cytoplasmic vesicle. Calcium-binding protein that interacts with newly synthesized monoglucosylated glycoproteins in the endoplasmic reticulum. It may act in assisting protein assembly and/or in the retention within the ER of unassembled protein subunits. It seems to play a major role in the quality control apparatus of the ER by the retention of incorrectly folded proteins. Required for embryogenesis and larval development under heat and ER stress conditions. May be important for germ cell development. Involved in neuronal necrotic cell death. The protein is Calnexin (cnx-1) of Caenorhabditis elegans.